We begin with the raw amino-acid sequence, 318 residues long: (1S)-1,7-diacetoxy-luvungin A aldo-keto reductase (318 aa).

Tyr-54 serves as the catalytic Proton donor.

Belongs to the aldo/keto reductase family. In terms of tissue distribution, expressed in flowers, maturing fruits and in juice vesicles.

The enzyme catalyses (1S)-1,7-diacetoxy-luvungin A + AH2 + H2O = (1R,2R,3S,8R,10R,11R,15S,16S)-3-(acetyloxy)-15-[(4R)-4-[(2S)-3,3-dimethyloxiran-2-yl]-1,4-dihydroxybutan-2-yl]-2,7,7,11,16-pentamethyl-5-oxo-6-oxatetracyclo[9.7.0.0(2,8).0(12,16)]octadec-12-en-10-yl acetate + acetate + A + H(+). It functions in the pathway secondary metabolite biosynthesis; terpenoid biosynthesis. Aldo-keto reductase involved in the biosynthesis of limonoids triterpene natural products such as limonin, a compound with insecticidal activity responsible for the bitter taste in citrus. Can use (1S)-1,7-diacetoxy-luvungin A as substrate. The polypeptide is (1S)-1,7-diacetoxy-luvungin A aldo-keto reductase (Citrus sinensis (Sweet orange)).